We begin with the raw amino-acid sequence, 286 residues long: Bifunctional protein FolD (286 aa).

NADP(+)-binding positions include 165–167 (GRS), Ser-190, and Ile-231.

Belongs to the tetrahydrofolate dehydrogenase/cyclohydrolase family. As to quaternary structure, homodimer.

The catalysed reaction is (6R)-5,10-methylene-5,6,7,8-tetrahydrofolate + NADP(+) = (6R)-5,10-methenyltetrahydrofolate + NADPH. It carries out the reaction (6R)-5,10-methenyltetrahydrofolate + H2O = (6R)-10-formyltetrahydrofolate + H(+). Its pathway is one-carbon metabolism; tetrahydrofolate interconversion. Functionally, catalyzes the oxidation of 5,10-methylenetetrahydrofolate to 5,10-methenyltetrahydrofolate and then the hydrolysis of 5,10-methenyltetrahydrofolate to 10-formyltetrahydrofolate. This Thermodesulfovibrio yellowstonii (strain ATCC 51303 / DSM 11347 / YP87) protein is Bifunctional protein FolD.